A 327-amino-acid chain; its full sequence is UDP-N-acetylenolpyruvoylglucosamine reductase (327 aa).

Residues Arg-42–His-223 enclose the FAD-binding PCMH-type domain. Arg-188 is an active-site residue. Ser-237 functions as the Proton donor in the catalytic mechanism. Residue Glu-307 is part of the active site.

The protein belongs to the MurB family. FAD is required as a cofactor.

The protein localises to the cytoplasm. The catalysed reaction is UDP-N-acetyl-alpha-D-muramate + NADP(+) = UDP-N-acetyl-3-O-(1-carboxyvinyl)-alpha-D-glucosamine + NADPH + H(+). It functions in the pathway cell wall biogenesis; peptidoglycan biosynthesis. Cell wall formation. This Bartonella tribocorum (strain CIP 105476 / IBS 506) protein is UDP-N-acetylenolpyruvoylglucosamine reductase.